Reading from the N-terminus, the 697-residue chain is Potassium-transporting ATPase ATP-binding subunit (697 aa).

4 helical membrane-spanning segments follow: residues 55 to 75 (PIMF…FLPS), 79 to 99 (SIPG…VLFA), 245 to 265 (LTLI…YLGF), and 271 to 291 (VLVA…LSAI). The active-site 4-aspartylphosphate intermediate is D324. ATP contacts are provided by residues D361, E365, 393–400 (FKAETRMS), and K412. Residues D535 and D539 each contribute to the Mg(2+) site. 3 consecutive transmembrane segments (helical) span residues 605–625 (FAII…LNIM), 633–653 (AILS…PLAM), and 677–697 (GGVI…GLFI).

Belongs to the cation transport ATPase (P-type) (TC 3.A.3) family. Type IA subfamily. In terms of assembly, the system is composed of three essential subunits: KdpA, KdpB and KdpC.

Its subcellular location is the cell membrane. The enzyme catalyses K(+)(out) + ATP + H2O = K(+)(in) + ADP + phosphate + H(+). Functionally, part of the high-affinity ATP-driven potassium transport (or Kdp) system, which catalyzes the hydrolysis of ATP coupled with the electrogenic transport of potassium into the cytoplasm. This subunit is responsible for energy coupling to the transport system and for the release of the potassium ions to the cytoplasm. This is Potassium-transporting ATPase ATP-binding subunit from Bacillus cereus (strain ATCC 14579 / DSM 31 / CCUG 7414 / JCM 2152 / NBRC 15305 / NCIMB 9373 / NCTC 2599 / NRRL B-3711).